Reading from the N-terminus, the 203-residue chain is GTP-binding protein rho4 (203 aa).

A GTP-binding site is contributed by 21-28 (GDGGCGKT). The Effector region motif lies at 43–51 (YVPTVFENY). Position 70–74 (70–74 (DTAGQ)) interacts with GTP. Cysteine 200 is modified (cysteine methyl ester). Residue cysteine 200 is the site of S-geranylgeranyl cysteine attachment. The propeptide at 201-203 (VIL) is removed in mature form.

It belongs to the small GTPase superfamily. Rho family.

The protein resides in the membrane. Functionally, required for cell separation. Involved in the regulation of the septum degradation during cytokinesis and in the organization of F-actin patches and cytoplasmic microtubules. The protein is GTP-binding protein rho4 (rho4) of Schizosaccharomyces pombe (strain 972 / ATCC 24843) (Fission yeast).